Reading from the N-terminus, the 342-residue chain is Elongation factor Ts (342 aa).

An involved in Mg(2+) ion dislocation from EF-Tu region spans residues 79 to 82; it reads TDFV.

This sequence belongs to the EF-Ts family.

It is found in the cytoplasm. Functionally, associates with the EF-Tu.GDP complex and induces the exchange of GDP to GTP. It remains bound to the aminoacyl-tRNA.EF-Tu.GTP complex up to the GTP hydrolysis stage on the ribosome. This is Elongation factor Ts from Lactococcus lactis subsp. cremoris (strain MG1363).